The following is a 342-amino-acid chain: Ribosomal RNA small subunit methyltransferase H (342 aa).

S-adenosyl-L-methionine is bound by residues 36–38 (GGH), aspartate 56, phenylalanine 82, aspartate 100, and glutamine 107. Residues 309–342 (ENRESGMGKGHGAAASRFPTPDSRFPTSPNGDAP) are disordered. A compositionally biased stretch (polar residues) spans 333-342 (FPTSPNGDAP).

Belongs to the methyltransferase superfamily. RsmH family.

Its subcellular location is the cytoplasm. The catalysed reaction is cytidine(1402) in 16S rRNA + S-adenosyl-L-methionine = N(4)-methylcytidine(1402) in 16S rRNA + S-adenosyl-L-homocysteine + H(+). Functionally, specifically methylates the N4 position of cytidine in position 1402 (C1402) of 16S rRNA. The polypeptide is Ribosomal RNA small subunit methyltransferase H (Xanthomonas campestris pv. campestris (strain B100)).